We begin with the raw amino-acid sequence, 156 residues long: Ribosomally synthesized cyclic peptide victorin precursosr vicA1 (156 aa).

An N-terminal signal peptide occupies residues M1–A21. 7 propeptides span residues M22–R36, K43–R55, K62–R74, K81–R93, K100–R112, K119–R131, and K138–R150.

In terms of processing, vicA1 is processed by several endopeptidases including kexin proteases as well as the cluster-specific peptidases vicP1 and vicP2 to produce 7 identical copies of the hexapeptide Gly-Leu-Lys-Leu-Ala-Phe, that are further modified to yield victorins. After being excised from the precursor peptide, the core peptides are cyclized and modified post-translationally by enzymes encoded within the gene cluster. The ustYa family protein vicYb is required for the formation of the macrocycle in victorin and the copper amine oxidases (CAOs) vicK1 and vicK2 are responsible for converting victorin to the active form by oxidizing the N-terminal glycyl residue in the peptides to glyoxylate. Relaxed substrate specificity of enzymes in the victorin biosynthetic pathway results in a metabolic grid that produces a set of analogs including victorinines B, C, E or HV-toxin M.

It functions in the pathway mycotoxin biosynthesis. Functionally, ribosomally synthesized cyclic peptide victorin precursor, part of the gene cluster that mediates the biosynthesis of the secondary metabolite victorin, the molecular basis for Victoria blight of oats. The vicA1 translated product contains a 7-fold repeated peptide embedding the hexapeptide Gly-Leu-Lys-Leu-Ala-Phe, that is converted into the cyclic victorin. In Bipolaris victoriae (strain FI3) (Victoria blight of oats agent), this protein is Ribosomally synthesized cyclic peptide victorin precursosr vicA1.